A 258-amino-acid chain; its full sequence is 14-3-3 protein 6 (258 aa).

The segment at 238 to 258 (DMQDDGTDEIKEATPKPDDNE) is disordered. Basic and acidic residues predominate over residues 245-258 (DEIKEATPKPDDNE).

The protein belongs to the 14-3-3 family. Homodimer.

This is 14-3-3 protein 6 (TFT6) from Solanum lycopersicum (Tomato).